Consider the following 127-residue polypeptide: Fluoride-specific ion channel FluC (127 aa).

Transmembrane regions (helical) follow at residues 4-24 (LLCA…WLGM), 35-55 (IGTL…LAWF), 71-91 (TGFC…VFLL), and 101-121 (LNVM…FWLF). Na(+)-binding residues include Gly75 and Thr78.

The protein belongs to the fluoride channel Fluc/FEX (TC 1.A.43) family.

Its subcellular location is the cell inner membrane. It carries out the reaction fluoride(in) = fluoride(out). With respect to regulation, na(+) is not transported, but it plays an essential structural role and its presence is essential for fluoride channel function. Its function is as follows. Fluoride-specific ion channel. Important for reducing fluoride concentration in the cell, thus reducing its toxicity. The chain is Fluoride-specific ion channel FluC from Klebsiella pneumoniae (strain 342).